A 637-amino-acid chain; its full sequence is Anthranilate synthase, phenazine specific (637 aa).

Residues 1-434 are anthranilate synthase component I; sequence MSQTAAHLME…QREQIQADFS (434 aa). In terms of domain architecture, Glutamine amidotransferase type-1 spans 437–628; it reads QVLIVDAEDT…LRHALIHTPV (192 aa). Active-site for GATase activity residues include cysteine 517, histidine 602, and glutamate 604.

The catalysed reaction is chorismate + L-glutamine = anthranilate + pyruvate + L-glutamate + H(+). It functions in the pathway antibiotic biosynthesis; phenazine biosynthesis. Its function is as follows. Involved in the biosynthesis of the antibiotic, phenazine, a nitrogen-containing heterocyclic molecule having important roles in virulence, competition and biological control. The polypeptide is Anthranilate synthase, phenazine specific (phzB) (Pseudomonas chlororaphis (Pseudomonas aureofaciens)).